Reading from the N-terminus, the 179-residue chain is Large ribosomal subunit protein uL6 (179 aa).

Belongs to the universal ribosomal protein uL6 family. As to quaternary structure, part of the 50S ribosomal subunit.

Its function is as follows. This protein binds to the 23S rRNA, and is important in its secondary structure. It is located near the subunit interface in the base of the L7/L12 stalk, and near the tRNA binding site of the peptidyltransferase center. The sequence is that of Large ribosomal subunit protein uL6 from Chlorobium limicola (strain DSM 245 / NBRC 103803 / 6330).